A 167-amino-acid chain; its full sequence is Signal recognition particle subunit SRP21 (167 aa).

At S2 the chain carries N-acetylserine. Residues 123–139 are compositionally biased toward basic and acidic residues; the sequence is VEKSDPAAKKTATEPKQ. The interval 123–167 is disordered; the sequence is VEKSDPAAKKTATEPKQKANAVQNNNGNSAASKKKKNKNKGKKKR. Residues 154-167 show a composition bias toward basic residues; that stretch reads SKKKKNKNKGKKKR.

As to quaternary structure, fungal signal recognition particle (SRP) complex consists of a 7S RNA molecule (scR1) and at least six protein subunits: SRP72, SRP68, SRP54, SEC65, SRP21 and SRP14. At least SRP14, SRP21, SRP68 and SRP72 are proposed to get assembled together with scR1 RNA as a pre-SRP complex in the nucleolus which is exported to the cytoplasm.

The protein localises to the cytoplasm. It localises to the nucleus. In terms of biological role, signal-recognition-particle (SRP) assembly has a crucial role in targeting secretory proteins to the rough endoplasmic reticulum (ER) membrane. SRP is required for the cotranslational protein translocation for ER import and preferentially recognizes strongly hydrophobic signal sequences. It is involved in targeting the nascent chain-ribosome (RNC) complex to the ER and is proposed to participate in the arrest of nascent chain elongation during membrane targeting. This chain is Signal recognition particle subunit SRP21 (SRP21), found in Saccharomyces cerevisiae (strain ATCC 204508 / S288c) (Baker's yeast).